Here is a 156-residue protein sequence, read N- to C-terminus: uncharacterized protein (156 aa).

This is an uncharacterized protein from Acheta domesticus (House cricket).